The sequence spans 354 residues: Serine/threonine-protein phosphatase 2A activator 2 (354 aa).

The protein belongs to the PTPA-type PPIase family.

Its subcellular location is the cytoplasm. It carries out the reaction [protein]-peptidylproline (omega=180) = [protein]-peptidylproline (omega=0). PPIases accelerate the folding of proteins. It catalyzes the cis-trans isomerization of proline imidic peptide bonds in oligopeptides. Acts as a regulatory subunit for PP2A-like phosphatases modulating their activity or substrate specificity, probably by inducing a conformational change in the catalytic subunit, a direct target of the PPIase. Can reactivate inactive phosphatase PP2A-phosphatase methylesterase complexes (PP2Ai) in presence of ATP and Mg(2+) by dissociating the inactive form from the complex. This Yarrowia lipolytica (strain CLIB 122 / E 150) (Yeast) protein is Serine/threonine-protein phosphatase 2A activator 2 (RRD2).